The chain runs to 562 residues: Probable E3 ubiquitin-protein ligase ARI7 (562 aa).

Residues 1-39 (MDSEEDMLDAHDMESGEDDFYSGGTDDCNDSDDGEPDYG) are disordered. The span at 27–39 (DCNDSDDGEPDYG) shows a compositional bias: acidic residues. The interval 133 to 346 (SELTCGICFD…GGFYACNRYE (214 aa)) is TRIAD supradomain. Zn(2+) contacts are provided by C137, C140, C154, H156, C159, C162, C182, C187, C226, C231, C248, C250, C255, C258, H263, C268, C295, and C298. The RING-type 1 zinc-finger motif lies at 137–187 (CGICFDSYPPEKIASVSCGHPFCTTCWTGYISTTINDGPGCLMLRCPDPSC). The IBR-type zinc-finger motif lies at 206 to 268 (EKYNRYFLRS…TEEAHRPVDC (63 aa)). The segment at 295–325 (CPRCKRPIEKNQGCMHMTCTPPCKYEFCWLC) adopts an RING-type 2; atypical zinc-finger fold. C308 is an active-site residue. The Zn(2+) site is built by C313, C317, C322, C325, H332, and C342. A disordered region spans residues 524–562 (ACSSKSTSSKSTGCSSKTRGKGKGSSRTGGSSRNPDDNL). Low complexity predominate over residues 525–540 (CSSKSTSSKSTGCSSK).

This sequence belongs to the RBR family. Ariadne subfamily. It depends on Zn(2+) as a cofactor. In terms of tissue distribution, ubiquitous.

It catalyses the reaction [E2 ubiquitin-conjugating enzyme]-S-ubiquitinyl-L-cysteine + [acceptor protein]-L-lysine = [E2 ubiquitin-conjugating enzyme]-L-cysteine + [acceptor protein]-N(6)-ubiquitinyl-L-lysine.. It participates in protein modification; protein ubiquitination. In terms of biological role, might act as an E3 ubiquitin-protein ligase, or as part of E3 complex, which accepts ubiquitin from specific E2 ubiquitin-conjugating enzymes and then transfers it to substrates. This chain is Probable E3 ubiquitin-protein ligase ARI7 (ARI7), found in Arabidopsis thaliana (Mouse-ear cress).